The following is a 465-amino-acid chain: uncharacterized protein (465 aa).

In terms of domain architecture, RAMA spans 6-91 (NVTLSNLIDF…LKLKREYLFR (86 aa)). Disordered regions lie at residues 95–377 (TGKN…SNNQ) and 392–465 (YNQQ…KSKS). The segment covering 117-137 (PQQQQQQQQQQQQQQQQQQQP) has biased composition (low complexity). The span at 156-169 (ETSDQDIDNDDDDA) shows a compositional bias: acidic residues. Residues 177–190 (TTTTTTTTTTTTTT) are compositionally biased toward low complexity. Residues 208 to 220 (PKEKKKEKKENIL) show a composition bias toward basic and acidic residues. Positions 214 to 242 (EKKENILTKKKQQSLQYQQQLQLLQRQNS) form a coiled coil. Residues 226–263 (QSLQYQQQLQLLQRQNSPPSVSPSSSTSTSSSTSSPAS) are compositionally biased toward low complexity. Positions 264–294 (NQIFNSFGPNSQNHNQYGINYNSQQHQPQQY) are enriched in polar residues. Residues 295–376 (NNNNNNNNNN…NNNINNNSNN (82 aa)) are compositionally biased toward low complexity. Polar residues predominate over residues 392–407 (YNQQNPPKHQYPNNFL). The segment covering 424–442 (NQSQNQNQNQNQNQNQNQK) has biased composition (low complexity). Positions 443 to 465 (SKSKSKSKSKFKSKSKSKSKSKS) are enriched in basic residues.

This is an uncharacterized protein from Dictyostelium discoideum (Social amoeba).